Reading from the N-terminus, the 556-residue chain is Urocanate hydratase (556 aa).

NAD(+) is bound by residues 52-53, glutamine 130, 176-178, glutamate 196, arginine 201, 242-243, 263-267, 273-274, and tyrosine 322; these read GG, GMG, NA, QTSAH, and YL. Cysteine 410 is an active-site residue. Residue glycine 492 coordinates NAD(+).

Belongs to the urocanase family. NAD(+) is required as a cofactor.

Its subcellular location is the cytoplasm. The catalysed reaction is 4-imidazolone-5-propanoate = trans-urocanate + H2O. The protein operates within amino-acid degradation; L-histidine degradation into L-glutamate; N-formimidoyl-L-glutamate from L-histidine: step 2/3. Catalyzes the conversion of urocanate to 4-imidazolone-5-propionate. The chain is Urocanate hydratase from Bradyrhizobium diazoefficiens (strain JCM 10833 / BCRC 13528 / IAM 13628 / NBRC 14792 / USDA 110).